A 206-amino-acid chain; its full sequence is GTP cyclohydrolase 1 (206 aa).

A compositionally biased stretch (basic and acidic residues) spans 1 to 17 (MDAVTPKKDIPRPDSVR). Residues 1–23 (MDAVTPKKDIPRPDSVRRPSQQE) form a disordered region. 3 residues coordinate Zn(2+): cysteine 95, histidine 98, and cysteine 166.

It belongs to the GTP cyclohydrolase I family. Toroid-shaped homodecamer, composed of two pentamers of five dimers.

It carries out the reaction GTP + H2O = 7,8-dihydroneopterin 3'-triphosphate + formate + H(+). Its pathway is cofactor biosynthesis; 7,8-dihydroneopterin triphosphate biosynthesis; 7,8-dihydroneopterin triphosphate from GTP: step 1/1. This is GTP cyclohydrolase 1 from Hyphomonas neptunium (strain ATCC 15444).